We begin with the raw amino-acid sequence, 194 residues long: Peptidyl-tRNA hydrolase (194 aa).

Tyr-16 contributes to the tRNA binding site. Catalysis depends on His-21, which acts as the Proton acceptor. Residues Phe-67, Asn-69, and Asn-115 each coordinate tRNA.

It belongs to the PTH family. In terms of assembly, monomer.

The protein localises to the cytoplasm. It catalyses the reaction an N-acyl-L-alpha-aminoacyl-tRNA + H2O = an N-acyl-L-amino acid + a tRNA + H(+). Functionally, hydrolyzes ribosome-free peptidyl-tRNAs (with 1 or more amino acids incorporated), which drop off the ribosome during protein synthesis, or as a result of ribosome stalling. Catalyzes the release of premature peptidyl moieties from peptidyl-tRNA molecules trapped in stalled 50S ribosomal subunits, and thus maintains levels of free tRNAs and 50S ribosomes. This Shigella flexneri protein is Peptidyl-tRNA hydrolase.